The sequence spans 277 residues: Indole-3-glycerol phosphate synthase (277 aa).

It belongs to the TrpC family.

It catalyses the reaction 1-(2-carboxyphenylamino)-1-deoxy-D-ribulose 5-phosphate + H(+) = (1S,2R)-1-C-(indol-3-yl)glycerol 3-phosphate + CO2 + H2O. It functions in the pathway amino-acid biosynthesis; L-tryptophan biosynthesis; L-tryptophan from chorismate: step 4/5. This is Indole-3-glycerol phosphate synthase from Pseudomonas putida (strain GB-1).